Here is a 281-residue protein sequence, read N- to C-terminus: 2-dehydro-3-deoxyphosphooctonate aldolase (281 aa).

Belongs to the KdsA family.

It localises to the cytoplasm. The catalysed reaction is D-arabinose 5-phosphate + phosphoenolpyruvate + H2O = 3-deoxy-alpha-D-manno-2-octulosonate-8-phosphate + phosphate. The protein operates within carbohydrate biosynthesis; 3-deoxy-D-manno-octulosonate biosynthesis; 3-deoxy-D-manno-octulosonate from D-ribulose 5-phosphate: step 2/3. Its pathway is bacterial outer membrane biogenesis; lipopolysaccharide biosynthesis. In Psychromonas ingrahamii (strain DSM 17664 / CCUG 51855 / 37), this protein is 2-dehydro-3-deoxyphosphooctonate aldolase.